We begin with the raw amino-acid sequence, 357 residues long: Protein Wnt-5b (357 aa).

The N-terminal stretch at 1 to 18 (MPGIRLLLAAALLCCPPP) is a signal peptide. Cysteine 81 and cysteine 92 form a disulfide bridge. N-linked (GlcNAc...) asparagine glycans are attached at residues asparagine 91 and asparagine 97. Disulfide bonds link cysteine 131/cysteine 139, cysteine 141/cysteine 159, cysteine 215/cysteine 229, cysteine 217/cysteine 224, cysteine 286/cysteine 317, cysteine 302/cysteine 312, cysteine 316/cysteine 356, cysteine 332/cysteine 347, cysteine 334/cysteine 344, and cysteine 339/cysteine 340. Serine 221 carries O-palmitoleoyl serine; by PORCN lipidation. Residues asparagine 289 and asparagine 303 are each glycosylated (N-linked (GlcNAc...) asparagine).

It belongs to the Wnt family. Post-translationally, palmitoleoylation is required for efficient binding to frizzled receptors. Depalmitoleoylation leads to Wnt signaling pathway inhibition. As to expression, predominantly in neuroectodermal tissues.

The protein localises to the secreted. It is found in the extracellular space. The protein resides in the extracellular matrix. In terms of biological role, ligand for members of the frizzled family of seven transmembrane receptors. Probable developmental protein. May be a signaling molecule which affects the development of discrete regions of tissues. Is likely to signal over only few cell diameters. This Ambystoma mexicanum (Axolotl) protein is Protein Wnt-5b (WNT-5B).